We begin with the raw amino-acid sequence, 800 residues long: Probable replication endonuclease from prophage-like region (800 aa).

Active-site O-(5'-phospho-DNA)-tyrosine intermediate residues include Y503 and Y507.

Belongs to the phage GPA family.

Possible endonuclease which induces a single-strand cut and initiates DNA replication. The sequence is that of Probable replication endonuclease from prophage-like region from Salmonella paratyphi A (strain ATCC 9150 / SARB42).